Consider the following 214-residue polypeptide: Variable small protein 24 (214 aa).

Positions 1-18 (MRKRISAIIMTLFMVFMS) are cleaved as a signal peptide. Cys19 is lipidated: N-palmitoyl cysteine. Residue Cys19 is the site of S-diacylglycerol cysteine attachment. The tract at residues 146-172 (TELGKKDASDDDTKKAIKKDNSDKTKG) is disordered.

It belongs to the variable small protein (Vsp) family.

It is found in the cell outer membrane. The Vlp and Vsp proteins are antigenically distinct proteins, only one vlp or vsp gene is transcriptionally active at any one time. Switching between these genes is a mechanism of host immune response evasion. The polypeptide is Variable small protein 24 (Borrelia hermsii).